The primary structure comprises 138 residues: Nucleoside diphosphate kinase (138 aa).

Positions 9, 57, 85, 91, 102, and 112 each coordinate ATP. His-115 (pros-phosphohistidine intermediate) is an active-site residue.

This sequence belongs to the NDK family. Homotetramer. Mg(2+) serves as cofactor.

Its subcellular location is the cytoplasm. It carries out the reaction a 2'-deoxyribonucleoside 5'-diphosphate + ATP = a 2'-deoxyribonucleoside 5'-triphosphate + ADP. The enzyme catalyses a ribonucleoside 5'-diphosphate + ATP = a ribonucleoside 5'-triphosphate + ADP. Functionally, major role in the synthesis of nucleoside triphosphates other than ATP. The ATP gamma phosphate is transferred to the NDP beta phosphate via a ping-pong mechanism, using a phosphorylated active-site intermediate. The protein is Nucleoside diphosphate kinase of Deinococcus deserti (strain DSM 17065 / CIP 109153 / LMG 22923 / VCD115).